The following is a 101-amino-acid chain: Small ribosomal subunit protein uS14 (101 aa).

The interval 46 to 72 (FELNRQPRDASPVRVRNRDSRDGRPRG) is disordered. Over residues 61–70 (RNRDSRDGRP) the composition is skewed to basic and acidic residues.

Belongs to the universal ribosomal protein uS14 family. As to quaternary structure, part of the 30S ribosomal subunit. Contacts proteins S3 and S10.

Binds 16S rRNA, required for the assembly of 30S particles and may also be responsible for determining the conformation of the 16S rRNA at the A site. The sequence is that of Small ribosomal subunit protein uS14 from Corynebacterium diphtheriae (strain ATCC 700971 / NCTC 13129 / Biotype gravis).